A 180-amino-acid polypeptide reads, in one-letter code: Probable Brix domain-containing ribosomal biogenesis protein (180 aa).

Residues 1 to 178 (MTTSRRPSPR…KPAEMVKRGR (178 aa)) enclose the Brix domain.

Probably involved in the biogenesis of the ribosome. The protein is Probable Brix domain-containing ribosomal biogenesis protein of Aeropyrum pernix (strain ATCC 700893 / DSM 11879 / JCM 9820 / NBRC 100138 / K1).